The chain runs to 409 residues: Lissencephaly-1 homolog (409 aa).

Residues 7 to 39 enclose the LisH domain; the sequence is QEEELRFAVADYLQSCGYTNALEAFKKDASIPK. A coiled-coil region spans residues 56–81; sequence SVVRLQKKVMDLELRLNNTTREMNSG. The segment covering 75 to 92 has biased composition (polar residues); the sequence is TREMNSGVPTRNSRSSND. The disordered stretch occupies residues 75 to 105; that stretch reads TREMNSGVPTRNSRSSNDWIPRPPEKHSLSG. WD repeat units lie at residues 105–146, 147–186, 189–228, 231–270, 273–332, 335–374, and 377–409; these read GHRS…RTLR, GHTD…CRMT, GHDH…CVYN, GHRE…CKEE, GHEH…CLFS, GHDN…CSKS, and AHNH…WECR.

This sequence belongs to the WD repeat LIS1/nudF family.

The protein localises to the cytoplasm. It is found in the cytoskeleton. Its subcellular location is the microtubule organizing center. The protein resides in the centrosome. Functionally, positively regulates the activity of the minus-end directed microtubule motor protein dynein. May enhance dynein-mediated microtubule sliding by targeting dynein to the microtubule plus end. Required for several dynein- and microtubule-dependent processes. This chain is Lissencephaly-1 homolog, found in Trichoplax adhaerens (Trichoplax reptans).